Here is a 124-residue protein sequence, read N- to C-terminus: Alpha-amylase inhibitor 0.19 (124 aa).

5 cysteine pairs are disulfide-bonded: C6–C52, C20–C41, C28–C83, C42–C99, and C54–C115.

Belongs to the protease inhibitor I6 (cereal trypsin/alpha-amylase inhibitor) family. As to quaternary structure, homodimer. In terms of processing, the disulfide bonds are essential for the inhibitor activity. Endosperm.

It localises to the secreted. Functionally, alpha-amylase inhibitor. The protein is Alpha-amylase inhibitor 0.19 of Triticum aestivum (Wheat).